Consider the following 63-residue polypeptide: Small ribosomal subunit protein eS31 (63 aa).

Zn(2+) is bound by residues cysteine 31, cysteine 34, cysteine 50, and cysteine 53.

This sequence belongs to the eukaryotic ribosomal protein eS31 family. Part of the 30S ribosomal subunit. Zn(2+) is required as a cofactor.

The protein is Small ribosomal subunit protein eS31 (rps27ae) of Aeropyrum pernix (strain ATCC 700893 / DSM 11879 / JCM 9820 / NBRC 100138 / K1).